The sequence spans 239 residues: Pathogenesis-related protein 5 (239 aa).

The signal sequence occupies residues 1–23; the sequence is MANISSIHILFLVFITSGIAVMA. Cystine bridges form between Cys32–Cys238, Cys79–Cys89, Cys94–Cys99, Cys146–Cys228, Cys151–Cys211, Cys159–Cys174, Cys178–Cys187, and Cys188–Cys198.

Belongs to the thaumatin family.

It is found in the secreted. The protein resides in the extracellular space. It localises to the apoplast. Functionally, partially responsible for acquired pathogen resistance. The protein is Pathogenesis-related protein 5 of Arabidopsis thaliana (Mouse-ear cress).